An 868-amino-acid chain; its full sequence is Dolichyl-phosphooligosaccharide-protein glycotransferase 3 (868 aa).

At 1–16 the chain is on the cytoplasmic side; the sequence is MQNAESWFKKYWHLSV. The chain crosses the membrane as a helical span at residues 17 to 36; that stretch reads LVIAALISVKLRILNPWNSV. Topologically, residues 37–101 are extracellular; the sequence is FTWTVRLGGN…IAGIIFSATS (65 aa). The short motif at 45 to 47 is the DXD motif 1 element; the sequence is GND. Mn(2+) is bound at residue aspartate 47. An a glycophospholipid-binding site is contributed by histidine 81. Residues 102-131 form a helical membrane-spanning segment; the sequence is GESLRAVLAFIPAIGGVLAILPVYLLTREV. At 132-133 the chain is on the cytoplasmic side; that stretch reads FD. Residues 134-153 traverse the membrane as a helical segment; that stretch reads KRAAVIAAFLIAIVPGQFLQ. The Extracellular portion of the chain corresponds to 154–162; the sequence is RSILGFNDH. Aspartate 161 provides a ligand contact to Mn(2+). The DXD motif 2 motif lies at 161–163; sequence DHH. Histidine 162 contacts a glycophospholipid. Histidine 163 is a Mn(2+) binding site. A helical transmembrane segment spans residues 163–184; it reads HIWEAFWQVSALGTFLLAYNRW. Residues 185–199 are Cytoplasmic-facing; that stretch reads KGHDLSHNLTARQMA. A helical transmembrane segment spans residues 200-212; it reads YPVIAGITIGLYV. The Extracellular portion of the chain corresponds to 213-215; that stretch reads LSW. Residues 216–238 form a helical membrane-spanning segment; sequence GAGFIIAPIILAFMFFAFVLAGF. Residues 239–241 are Cytoplasmic-facing; the sequence is VNA. The chain crosses the membrane as a helical span at residues 242–262; sequence DRKNLSLVAVVTFAVSALIYL. Over 263-279 the chain is Extracellular; it reads PFAFNYPGFSTIFYSPF. The helical transmembrane segment at 280-303 threads the bilayer; sequence QLLVLLGSAVIAAAFYQIEKWNDV. The Cytoplasmic segment spans residues 304–312; it reads GFFERVGLG. Residues 313–330 form a helical membrane-spanning segment; the sequence is RKGMPLAVIVLTALIMGL. The Extracellular portion of the chain corresponds to 331 to 373; that stretch reads FFVISPDFARNLLSVVRVVQPKGGALTIAEVYPFFFTHNGEFT. The TIXE motif signature appears at 357-360; that stretch reads TIAE. A helical transmembrane segment spans residues 374–396; the sequence is LTNAVLHFGALFFFGMAGILYSA. The Cytoplasmic segment spans residues 397–404; the sequence is YRFLKRRS. The helical transmembrane segment at 405–423 threads the bilayer; sequence FPEMALLIWAIAMFIALWG. Residues 424–427 are Extracellular-facing; the sequence is QNRF. Residue arginine 426 coordinates a glycophospholipid. A helical membrane pass occupies residues 428–452; the sequence is AYYFAAVSAVYSALALSVVFDKLHL. Residues 453–468 are Cytoplasmic-facing; that stretch reads YRALENAIGARNKLSY. The chain crosses the membrane as a helical span at residues 469-494; sequence FRVAFALLIALAAIYPTYILADAQSS. The Extracellular portion of the chain corresponds to 495–868; it reads YAGGPNKQWY…QNGEIIQLDL (374 aa). The segment at 550–552 is interacts with target acceptor peptide in protein substrate; the sequence is WWD. Positions 550–554 match the WWDYG motif motif; that stretch reads WWDYG. The short motif at 613 to 622 is the DKi motif element; that stretch reads EMETGKYYAM.

The protein belongs to the STT3 family. Requires Mg(2+) as cofactor. Mn(2+) is required as a cofactor. It depends on Zn(2+) as a cofactor.

The protein localises to the cell membrane. The catalysed reaction is an archaeal dolichyl phosphooligosaccharide + [protein]-L-asparagine = an archaeal dolichyl phosphate + a glycoprotein with the oligosaccharide chain attached by N-beta-D-glycosyl linkage to a protein L-asparagine.. It participates in protein modification; protein glycosylation. In terms of biological role, oligosaccharyl transferase (OST) that catalyzes the initial transfer of a defined glycan (a glucose-linked heptasaccharide composed of 3 Glc, 2 Man, 2 Gal and a sulfate for A.fulgidus AglB-L) from the lipid carrier dolichol-monophosphate to an asparagine residue within an Asn-X-Ser/Thr consensus motif in nascent polypeptide chains, the first step in protein N-glycosylation. This is Dolichyl-phosphooligosaccharide-protein glycotransferase 3 (aglB3) from Archaeoglobus fulgidus (strain ATCC 49558 / DSM 4304 / JCM 9628 / NBRC 100126 / VC-16).